The sequence spans 502 residues: Lysine--tRNA ligase (502 aa).

The disordered stretch occupies residues 1–22 (MSDHEQAQAQSQDENQIMAERR). The Mg(2+) site is built by Glu-413 and Glu-420.

It belongs to the class-II aminoacyl-tRNA synthetase family. As to quaternary structure, homodimer. Mg(2+) is required as a cofactor.

It is found in the cytoplasm. The enzyme catalyses tRNA(Lys) + L-lysine + ATP = L-lysyl-tRNA(Lys) + AMP + diphosphate. The chain is Lysine--tRNA ligase from Chromobacterium violaceum (strain ATCC 12472 / DSM 30191 / JCM 1249 / CCUG 213 / NBRC 12614 / NCIMB 9131 / NCTC 9757 / MK).